Here is a 750-residue protein sequence, read N- to C-terminus: Methylmalonyl-CoA mutase, mitochondrial (750 aa).

The transit peptide at 1 to 32 directs the protein to the mitochondrion; sequence MLRVKNQLFLLSPHYLKQVKESSGSRLIRQRF. Gln-50 is a binding site for malonyl-CoA. Lys-89 is modified (N6-acetyllysine). Residues 96–99 and 106–110 contribute to the malonyl-CoA site; these read YPTM and TIRQY. An N6-acetyllysine modification is found at Lys-212. Residues 216–218, Arg-228, Lys-255, His-265, and 304–306 contribute to the malonyl-CoA site; these read TIQ and RLS. Residue Lys-335 is modified to N6-acetyllysine. Lys-343 bears the N6-succinyllysine mark. At Ser-481 the chain carries Phosphoserine. At Lys-595 the chain carries N6-succinyllysine. Residue Lys-602 is modified to N6-acetyllysine. Positions 614–746 constitute a B12-binding domain; the sequence is RPRLLVAKMG…DDIEKCLEKK (133 aa). An adenosylcob(III)alamin-binding site is contributed by His-627.

Belongs to the methylmalonyl-CoA mutase family. In terms of assembly, homodimer. Interacts (the apoenzyme form) with MMAA; the interaction is GTP dependent. Requires adenosylcob(III)alamin as cofactor.

The protein localises to the mitochondrion matrix. It is found in the mitochondrion. The protein resides in the cytoplasm. It carries out the reaction (R)-methylmalonyl-CoA = succinyl-CoA. With respect to regulation, inhibited by itaconyl-CoA, a metabolite that inactivates the coenzyme B12 cofactor. Catalyzes the reversible isomerization of methylmalonyl-CoA (MMCoA) (generated from branched-chain amino acid metabolism and degradation of dietary odd chain fatty acids and cholesterol) to succinyl-CoA (3-carboxypropionyl-CoA), a key intermediate of the tricarboxylic acid cycle. The chain is Methylmalonyl-CoA mutase, mitochondrial (MMUT) from Macaca fascicularis (Crab-eating macaque).